Consider the following 538-residue polypeptide: Cytochrome P450 monooxygenase okaG (538 aa).

A helical transmembrane segment spans residues 3 to 23 (LISPLAAVLSAMAIVLGLLFF). A heme-binding site is contributed by C484.

This sequence belongs to the cytochrome P450 family. The cofactor is heme.

The protein localises to the membrane. The enzyme catalyses 12-deshydroxyl okaramine E + 2 reduced [NADPH--hemoprotein reductase] + 2 O2 = 3-desmethyl okaramine B + 2 oxidized [NADPH--hemoprotein reductase] + 2 H2O + 2 H(+). It functions in the pathway alkaloid biosynthesis. In terms of biological role, nonribosomal peptide synthetase; part of the gene cluster that mediates the biosynthesis of okaramine B, a prenylated indole alkaloid that possesses an unusual octacyclic ring system, including a four-membered azetidine ring and an eight-membered azocine ring, and that exhibits insecticidal activity against silkworm larvae. Within the pathway, okaG acts as a 2,3-diol synthase that installs 2,3-diol on the okaramine scaffold to convert 12-deshydroxyl okaramine E into 3-desmethyl okaramine B. OkaG is also able to produce use okaramine E and produce okaramine D with the help of the methyltransferase okaF. The biosynthesis begins with the NRPS okaA that condenses two tryptophan molecules into cyclo(L-Trp-L-Trp). Prenylation by the prenyltransferase okaC then leads to the formation of cyclo(N8-(alpha,alpha-dimethylallyl)-L-Trp-6a-(alpha,alpha-dime-thylallyl)-L-Trp). This is followed by indole 2,3-epoxidation by the FAD-dependent monooxygenase okaB to facilitate the formation of the hexahydropyrrolo[2,3-b]indole (HPI) moiety of okaramine C. The cytochrome P450 monooxygenase okaD then likely catalyzes formation of the eight-membered ring of okaramine A. The dioxygenase okaE further forms the unusual 2-dimethyl-3-methyl-azetidine ring to yield 12-deshydroxyl okaramine E, as well as the hydroxylation of 12-deshydroxyl okaramine E to produce okaramine E. The cytochrome P450 monoxygenase okaG converts 12-deshydroxyl okaramine E into 3-desmethyl okaramine B which is further methylated by the methyltransferase okaF into okaramine B. In a shunt pathway, okaG and okaF together are also able to convert okaramine E into okaramine D. Okaramine H is produced by nonenzymatic conversion from okaramine A. This chain is Cytochrome P450 monooxygenase okaG, found in Penicillium ochrochloron.